Reading from the N-terminus, the 336-residue chain is Large ribosomal subunit protein uL10 (336 aa).

Residues 292–336 form a disordered region; it reads LKEKLSSRAAAPAPEEKEEEVEEEAEEEEEEEEEDAAAGLGALFG. The span at 307–327 shows a compositional bias: acidic residues; sequence EKEEEVEEEAEEEEEEEEEDA.

This sequence belongs to the universal ribosomal protein uL10 family. As to quaternary structure, part of the 50S ribosomal subunit. Forms part of the ribosomal stalk which helps the ribosome interact with GTP-bound translation factors. Forms a heptameric L10(L12)2(L12)2(L12)2 complex, where L10 forms an elongated spine to which the L12 dimers bind in a sequential fashion.

Forms part of the ribosomal stalk, playing a central role in the interaction of the ribosome with GTP-bound translation factors. This chain is Large ribosomal subunit protein uL10, found in Methanothermobacter thermautotrophicus (strain ATCC 29096 / DSM 1053 / JCM 10044 / NBRC 100330 / Delta H) (Methanobacterium thermoautotrophicum).